Here is a 260-residue protein sequence, read N- to C-terminus: Indole-3-glycerol phosphate synthase (260 aa).

This sequence belongs to the TrpC family.

The catalysed reaction is 1-(2-carboxyphenylamino)-1-deoxy-D-ribulose 5-phosphate + H(+) = (1S,2R)-1-C-(indol-3-yl)glycerol 3-phosphate + CO2 + H2O. It participates in amino-acid biosynthesis; L-tryptophan biosynthesis; L-tryptophan from chorismate: step 4/5. This Neisseria gonorrhoeae (strain NCCP11945) protein is Indole-3-glycerol phosphate synthase.